We begin with the raw amino-acid sequence, 572 residues long: Galectin-3-binding protein B (572 aa).

Positions 1–14 (MLLLWPLLFLQVSA) are cleaved as a signal peptide. The 100-residue stretch at 32–131 (VRLVGVIPSS…HKEDAGVICA (100 aa)) folds into the SRCR domain. Cystine bridges form between Cys-56/Cys-120, Cys-69/Cys-130, and Cys-100/Cys-110. N-linked (GlcNAc...) asparagine glycosylation is found at Asn-135, Asn-195, and Asn-202. Residues 164-231 (CDFTIAVRDL…LYTRQIDVST (68 aa)) enclose the BTB domain. Residues 270-372 (QVSMYEYGVR…IPVDKLYDIQ (103 aa)) form the BACK domain. Asn-430 and Asn-548 each carry an N-linked (GlcNAc...) asparagine glycan.

Its subcellular location is the secreted. It is found in the extracellular space. It localises to the extracellular matrix. In terms of biological role, promotes integrin-mediated cell adhesion. This chain is Galectin-3-binding protein B (lgals3bpb), found in Danio rerio (Zebrafish).